The sequence spans 366 residues: tRNA/tmRNA (uracil-C(5))-methyltransferase (366 aa).

Residues Q190, Y218, N223, E239, and D299 each coordinate S-adenosyl-L-methionine. The Nucleophile role is filled by C324. Catalysis depends on E358, which acts as the Proton acceptor.

Belongs to the class I-like SAM-binding methyltransferase superfamily. RNA M5U methyltransferase family. TrmA subfamily.

The catalysed reaction is uridine(54) in tRNA + S-adenosyl-L-methionine = 5-methyluridine(54) in tRNA + S-adenosyl-L-homocysteine + H(+). It catalyses the reaction uridine(341) in tmRNA + S-adenosyl-L-methionine = 5-methyluridine(341) in tmRNA + S-adenosyl-L-homocysteine + H(+). Its function is as follows. Dual-specificity methyltransferase that catalyzes the formation of 5-methyluridine at position 54 (m5U54) in all tRNAs, and that of position 341 (m5U341) in tmRNA (transfer-mRNA). The chain is tRNA/tmRNA (uracil-C(5))-methyltransferase from Escherichia coli O7:K1 (strain IAI39 / ExPEC).